The chain runs to 367 residues: Beta sliding clamp (367 aa).

The protein belongs to the beta sliding clamp family. As to quaternary structure, forms a ring-shaped head-to-tail homodimer around DNA which binds and tethers DNA polymerases and other proteins to the DNA. The DNA replisome complex has a single clamp-loading complex (3 tau and 1 each of delta, delta', psi and chi subunits) which binds 3 Pol III cores (1 core on the leading strand and 2 on the lagging strand) each with a beta sliding clamp dimer. Additional proteins in the replisome are other copies of gamma, psi and chi, Ssb, DNA helicase and RNA primase.

It is found in the cytoplasm. In terms of biological role, confers DNA tethering and processivity to DNA polymerases and other proteins. Acts as a clamp, forming a ring around DNA (a reaction catalyzed by the clamp-loading complex) which diffuses in an ATP-independent manner freely and bidirectionally along dsDNA. Initially characterized for its ability to contact the catalytic subunit of DNA polymerase III (Pol III), a complex, multichain enzyme responsible for most of the replicative synthesis in bacteria; Pol III exhibits 3'-5' exonuclease proofreading activity. The beta chain is required for initiation of replication as well as for processivity of DNA replication. The protein is Beta sliding clamp (dnaN) of Pseudomonas aeruginosa (strain ATCC 15692 / DSM 22644 / CIP 104116 / JCM 14847 / LMG 12228 / 1C / PRS 101 / PAO1).